Consider the following 102-residue polypeptide: Integration host factor subunit alpha (102 aa).

The interval 49–70 (FGNFQLRTKPQRPGRNPKTGEE) is disordered.

It belongs to the bacterial histone-like protein family. In terms of assembly, heterodimer of an alpha and a beta chain.

Its function is as follows. This protein is one of the two subunits of integration host factor, a specific DNA-binding protein that functions in genetic recombination as well as in transcriptional and translational control. This Nitrosomonas europaea (strain ATCC 19718 / CIP 103999 / KCTC 2705 / NBRC 14298) protein is Integration host factor subunit alpha.